The primary structure comprises 134 residues: Putative protein KRIP1 (134 aa).

The interval 1-134 (MSPVHRSRTS…PDPALPLQML (134 aa)) is disordered. Composition is skewed to polar residues over residues 9–24 (TSQT…TLSF), 43–55 (SQPN…SHVS), and 64–79 (CSQS…TNPN). The span at 119-128 (PAKPALPDPA) shows a compositional bias: pro residues.

In terms of tissue distribution, abundant expression is found in prostate, restricted to cells of epithelial origin in normal and diseased glands. Very low expression is detected in pancreas and ovary.

The protein resides in the cytoplasm. It localises to the nucleus. The chain is Putative protein KRIP1 (KLKP1) from Homo sapiens (Human).